We begin with the raw amino-acid sequence, 824 residues long: MKEYRPQEIEKKWQEVWEEKKVFYTPQRSEKPKYYALVMFPYPSGTLHVGHVKNYVIGDIVARYKRMRGYNVLHPFGYDAFGLPAENAAIEKGIHPEEWTRKNINTIRGQVKKLGISYDWSREIATCDEEYYKWTQWIFLQLYKNGLAYKKKAAVNWCPKCKTVLANEQVKDGKCERCGTSVTIRHLEQWFFKITDYAERLLNDLDKLTGWPEHVKTMQRNWIGKSTGAEIDFPVEGSDTKIRVFTTRPDTLWGVTFMALAPESPLVEELVLEEKKEDLQEFLERVKQQDRFRRTSVEAEKEGFFLGRYAINPVTGERIPIYVANYILMEYGTGAIMGVPAHDQRDFSFAKKYGIPIKVVIKPADRDLDPEKMEEAYEGEGIMVNSGPFDGTPSSEGIEKVINWLEEKGIGKRSVQYKLRDWLISRQRYWGAPIPIIYCEKCGVVPVPEEDLPVRLPKDVEFLPTGQSPLSFHEGFKRTKCPICGGEAQRETDTMDTFVDSSWYFLRYVNPHLEDKPFEPDDVNYWLPVDQYIGGVEHAVLHLLYSRFVTKVLHDLGYLNFDEPFTNLFTQGMIYKDGAKMSKSKGNVVSPDEMIEKYGADTLRMYILFMAPPEKDAEWSDAGIEGVHRFIKRLWNTFYTVLPFVKEENTENLVLKNSTEKELRRKLHSIIKKITEDIEGGFKFNTAISGLMELVNHLSQYLNSVPQEEWNRKLLREIVEKLTLALSPFAPHLAEEFWHDLGNDSLVVQQAWPSYDPKALEVEEVEIAIQINGKVRDKVVVPVDISEEALKRIVLERERVKEYVDGKPIRKFIYVKGRIVNIVV.

The 'HIGH' region motif lies at 41 to 51 (PYPSGTLHVGH). Positions 580–584 (KMSKS) match the 'KMSKS' region motif. ATP is bound at residue Lys583.

Belongs to the class-I aminoacyl-tRNA synthetase family.

It is found in the cytoplasm. The enzyme catalyses tRNA(Leu) + L-leucine + ATP = L-leucyl-tRNA(Leu) + AMP + diphosphate. The chain is Leucine--tRNA ligase from Thermotoga petrophila (strain ATCC BAA-488 / DSM 13995 / JCM 10881 / RKU-1).